Here is a 322-residue protein sequence, read N- to C-terminus: Acetylglutamate kinase (322 aa).

Substrate is bound by residues 89–90 (GG), arginine 111, and asparagine 217.

This sequence belongs to the acetylglutamate kinase family. ArgB subfamily.

The protein resides in the cytoplasm. The catalysed reaction is N-acetyl-L-glutamate + ATP = N-acetyl-L-glutamyl 5-phosphate + ADP. Its pathway is amino-acid biosynthesis; L-arginine biosynthesis; N(2)-acetyl-L-ornithine from L-glutamate: step 2/4. Catalyzes the ATP-dependent phosphorylation of N-acetyl-L-glutamate. The polypeptide is Acetylglutamate kinase (Ehrlichia ruminantium (strain Welgevonden)).